The following is a 691-amino-acid chain: Protein 4.2 (691 aa).

Residue G2 is the site of N-myristoyl glycine attachment. Residues L31–F39 form a band 3 binding region. Residue S248 is modified to Phosphoserine. The residue at position 570 (Y570) is a Phosphotyrosine.

This sequence belongs to the transglutaminase superfamily. Transglutaminase family. Component of the ankyrin-1 complex in the erythrocyte, composed of ANK1, RHCE, RHAG, SLC4A1, EPB42, GYPA, GYPB and AQP1. Interacts with SLC4A1 (via the cytoplasmic domain); this interaction is mediated by the SLC4A1 Band 3-I dimer. Interacts with ANK1 (via ANK 1-13 repeats). Interacts with AQP1 (via the C-terminal).

It localises to the cell membrane. Its subcellular location is the cytoplasm. The protein resides in the cytoskeleton. Its function is as follows. Component of the ankyrin-1 complex, a multiprotein complex involved in the stability and shape of the erythrocyte membrane. This is Protein 4.2 from Mus musculus (Mouse).